Here is a 358-residue protein sequence, read N- to C-terminus: Chorismate synthase (358 aa).

NADP(+)-binding residues include R46 and R52. FMN contacts are provided by residues R123–S125, N239–A240, G283, K298–T302, and R324.

The protein belongs to the chorismate synthase family. As to quaternary structure, homotetramer. It depends on FMNH2 as a cofactor.

The enzyme catalyses 5-O-(1-carboxyvinyl)-3-phosphoshikimate = chorismate + phosphate. It participates in metabolic intermediate biosynthesis; chorismate biosynthesis; chorismate from D-erythrose 4-phosphate and phosphoenolpyruvate: step 7/7. Catalyzes the anti-1,4-elimination of the C-3 phosphate and the C-6 proR hydrogen from 5-enolpyruvylshikimate-3-phosphate (EPSP) to yield chorismate, which is the branch point compound that serves as the starting substrate for the three terminal pathways of aromatic amino acid biosynthesis. This reaction introduces a second double bond into the aromatic ring system. This is Chorismate synthase from Parabacteroides distasonis (strain ATCC 8503 / DSM 20701 / CIP 104284 / JCM 5825 / NCTC 11152).